Here is a 360-residue protein sequence, read N- to C-terminus: N-acetylmuramoyl-L-alanine amidase CwlL (360 aa).

The first 39 residues, 1 to 39 (MVKVVKNFVKVNQYTRPGLKLAGVKGIVMHYTATPGASA), serve as a signal peptide directing secretion. Residues 40 to 154 (LNERDYFNGT…DVTNKICPAP (115 aa)) enclose the N-acetylmuramoyl-L-alanine amidase domain. Repeat copies occupy residues 166-191 (RKKV…SSKS), 196-259 (LKKG…EKAL), 265-289 (KKKK…KVKS), and 291-355 (LMKG…KAKL). 2 X approximate repeats stretches follow at residues 166–289 (RKKV…KVKS) and 196–355 (LKKG…KAKL).

Belongs to the N-acetylmuramoyl-L-alanine amidase 2 family.

The protein localises to the secreted. It carries out the reaction Hydrolyzes the link between N-acetylmuramoyl residues and L-amino acid residues in certain cell-wall glycopeptides.. The protein is N-acetylmuramoyl-L-alanine amidase CwlL (cwlL) of Bacillus licheniformis.